The sequence spans 508 residues: O-acetyltransferase pigM (508 aa).

The segment at 166 to 188 (TPAPDERGKISPSLEDAAGSPRT) is disordered.

The protein operates within secondary metabolite biosynthesis. Functionally, O-acetyltransferase; part of the gene cluster that mediates the biosynthesis of azaphilone pigments (MonAzPs), a complex mixture of compounds with a common azaphilone skeleton very widely used as food colorants. PigM and pigO are involved in the elimination of the omega-1 alcohol with pigM acting as an O-acetyltransferase that synthesizes the O-11 acetyl intermediate whereas pigO eliminates acetic acid to yield an intermediate with a C10(11) double bond. The first step of the pathway is performed by the nrPKS pigA that forms the hexaketide precursor from successive condensations of five malonyl-CoA units, with a simple acetyl-CoA starter unit. The role of esterase pigG is not clear, but it may play at most a supplementary role in the formation of the benzaldehyde produced by the pigA nrPKS. This very reactive benzaldehyde is intercepted by the pigC ketoreductase that to provide the first stable enzyme-free MonAzPs intermediate, 6-(4-hydroxy-2-oxopentyl)-3-methyl-2,4-dioxocyclohexane carbaldehyde, also known as M7PKS-1. The FAD-dependent monooxygenase pigN hydroxylates M7PKS-1 at C-4, which triggers the formation of the pyran ring. PigJ, pigK and pigD are involved in the acetylation of the pyran ring. PigJ and pigK form the two subunits of a dedicated fungal FAS that produces the side chain fatty acyl moiety of MonAzPs and pigD transfers the fatty acyl chain to the C-4 alcohol. PigM and pigO are involved in the elimination of the omega-1 alcohol. PigM acts as an O-acetyltransferase that synthesizes the putative O-11 acetyl intermediate whereas pigO eliminates acetic acid to yield an intermediate with a C10(11) double bond. The dehydration of the C-11 alcohol followed by the reduction of the C6(7) double bond by the NAD(P)H-dependent oxidoreductase pigE increases the electrophilicity of the C-5 ketone of the resulting acyl benzopyran. This in turn sets up the C-5 ketone for an intramolecular Knoevenagel aldol condensation with the C-20 enol of the side chain. This condensation affords the characteristic linear tricyclic carbon skeletons of the yellow pigments that serve as the common precursors for the classical yellow pigments monascin and ankaflavin, orange pigments rubopunctatin and monascorubrin, and red pigments ribropunctamine and monascorubramine. The FAD-dependent oxidoreductase pigF is especially invoved in the biosynthesis of orange and red pigments via desaturation of C6(7). The chain is O-acetyltransferase pigM from Monascus ruber (Mold).